The primary structure comprises 223 residues: Deoxyribose-phosphate aldolase (223 aa).

Aspartate 91 serves as the catalytic Proton donor/acceptor. Lysine 154 serves as the catalytic Schiff-base intermediate with acetaldehyde. Lysine 183 functions as the Proton donor/acceptor in the catalytic mechanism.

The protein belongs to the DeoC/FbaB aldolase family. DeoC type 1 subfamily.

It localises to the cytoplasm. It carries out the reaction 2-deoxy-D-ribose 5-phosphate = D-glyceraldehyde 3-phosphate + acetaldehyde. Its pathway is carbohydrate degradation; 2-deoxy-D-ribose 1-phosphate degradation; D-glyceraldehyde 3-phosphate and acetaldehyde from 2-deoxy-alpha-D-ribose 1-phosphate: step 2/2. Catalyzes a reversible aldol reaction between acetaldehyde and D-glyceraldehyde 3-phosphate to generate 2-deoxy-D-ribose 5-phosphate. In Lysinibacillus sphaericus (strain C3-41), this protein is Deoxyribose-phosphate aldolase.